Reading from the N-terminus, the 240-residue chain is Urease accessory protein UreF (240 aa).

This sequence belongs to the UreF family. As to quaternary structure, ureD, UreF and UreG form a complex that acts as a GTP-hydrolysis-dependent molecular chaperone, activating the urease apoprotein by helping to assemble the nickel containing metallocenter of UreC. The UreE protein probably delivers the nickel.

The protein localises to the cytoplasm. Functionally, required for maturation of urease via the functional incorporation of the urease nickel metallocenter. This chain is Urease accessory protein UreF, found in Bradyrhizobium sp. (strain ORS 278).